The following is a 312-amino-acid chain: MPRLLATQSHVVHGYVGNKAATFPLQCLGWDVDCCNSVQFSNHTGYGLDKVFGTITRETDLKELLSGLFDNFSQDYQALLSGYLPNKNSVRCMGTYYAKFKEANPEMIWLMDPVMGDEGQLYVSEDVIPEYRKLALSPKQLVDIITPNQFELEILYGGEIKTKEHLKKALKKLHQTIPVIIVTSCDCKMFDDKDFIYCVASMEGKTPIVYRVPFIDSYFTGVGDLFSALLLDRVYKILSNPTTTLKFEDQVNNVLNVIQKVLKITRSYASGKMKAKMGSALEMKEMELRLIESRDIYETINIHQTDYIYARL.

3 residues coordinate substrate: serine 9, threonine 44, and tyrosine 122. ATP contacts are provided by residues 183–184 (TS) and 211–223 (RVPF…TGVG). Residue aspartate 224 participates in substrate binding.

Belongs to the pyridoxine kinase family. A divalent metal cation serves as cofactor.

The protein resides in the cytoplasm. It localises to the nucleus. It carries out the reaction pyridoxal + ATP = pyridoxal 5'-phosphate + ADP + H(+). In terms of biological role, required for synthesis of pyridoxal-5-phosphate from vitamin B6. Important for bud site selection. The polypeptide is Putative pyridoxal kinase BUD16 (BUD16) (Saccharomyces cerevisiae (strain ATCC 204508 / S288c) (Baker's yeast)).